Consider the following 234-residue polypeptide: Fibronectin type III domain-containing protein 4 (234 aa).

The signal sequence occupies residues 1-44 (MPSGCHSSPPSGLRGDMASLVPLSPYLSPTVLLLVSCDLGFVRA). Topologically, residues 45–167 (DRPPSPVNVT…GLDGERPLQT (123 aa)) are extracellular. The region spanning 47–140 (PPSPVNVTVT…PRVHFRTLKG (94 aa)) is the Fibronectin type-III domain. N-linked (GlcNAc...) asparagine glycans are attached at residues asparagine 52, asparagine 97, and asparagine 147. The tract at residues 122–160 (GLRGESPPGPRVHFRTLKGSDRLPSNSSSPGDITVEGLD) is disordered. A helical membrane pass occupies residues 168 to 188 (GEVVIIVVVLLMWAAVIGLFC). Residues 189–234 (RQYDIIKDNDSNNNPKEKGKGPEQSPQGRPVGTRQKKSPSINTIDV) lie on the Cytoplasmic side of the membrane. Positions 197–209 (NDSNNNPKEKGKG) are enriched in basic and acidic residues. The interval 197-234 (NDSNNNPKEKGKGPEQSPQGRPVGTRQKKSPSINTIDV) is disordered.

As to expression, highly expressed in the liver and the brain, including in the cortex, hypothalamus and hippocampus. Also expressed in adipose tissue.

Its subcellular location is the membrane. It localises to the secreted. Functionally, has anti-inflammatory properties. In the colon, acts on macrophages to down-regulate inflammation. May suppress osteoclastogenesis and mature osteoclast resorptive function. In white adipose tissue, decreases local inflammation, via interaction with GPR116. Also required for proper systemic glucose tolerance, specifically sensitizing white adipocytes to insulin and promoting glucose uptake. The insulin sensitizing function in adipose tissue is mediated by interaction with ADGRF5/GPR116 and activation of cAMP signaling. This Homo sapiens (Human) protein is Fibronectin type III domain-containing protein 4 (FNDC4).